We begin with the raw amino-acid sequence, 509 residues long: 2-isopropylmalate synthase (509 aa).

A Pyruvate carboxyltransferase domain is found at 5-267; it reads IQIFDTTLRD…QTALNLEETK (263 aa). Mn(2+)-binding residues include D14, H202, H204, and N238. The interval 391–509 is regulatory domain; sequence KLETLQLQYV…AAENVEKVGN (119 aa).

This sequence belongs to the alpha-IPM synthase/homocitrate synthase family. LeuA type 1 subfamily. In terms of assembly, homodimer. It depends on Mn(2+) as a cofactor.

The protein resides in the cytoplasm. It catalyses the reaction 3-methyl-2-oxobutanoate + acetyl-CoA + H2O = (2S)-2-isopropylmalate + CoA + H(+). Its pathway is amino-acid biosynthesis; L-leucine biosynthesis; L-leucine from 3-methyl-2-oxobutanoate: step 1/4. Its function is as follows. Catalyzes the condensation of the acetyl group of acetyl-CoA with 3-methyl-2-oxobutanoate (2-ketoisovalerate) to form 3-carboxy-3-hydroxy-4-methylpentanoate (2-isopropylmalate). This is 2-isopropylmalate synthase from Staphylococcus aureus (strain bovine RF122 / ET3-1).